Here is a 341-residue protein sequence, read N- to C-terminus: N-acetyl-gamma-glutamyl-phosphate reductase (341 aa).

The active site involves cysteine 151.

The protein belongs to the NAGSA dehydrogenase family. Type 1 subfamily.

The protein resides in the cytoplasm. The catalysed reaction is N-acetyl-L-glutamate 5-semialdehyde + phosphate + NADP(+) = N-acetyl-L-glutamyl 5-phosphate + NADPH + H(+). Its pathway is amino-acid biosynthesis; L-arginine biosynthesis; N(2)-acetyl-L-ornithine from L-glutamate: step 3/4. Functionally, catalyzes the NADPH-dependent reduction of N-acetyl-5-glutamyl phosphate to yield N-acetyl-L-glutamate 5-semialdehyde. This chain is N-acetyl-gamma-glutamyl-phosphate reductase, found in Chlorobaculum tepidum (strain ATCC 49652 / DSM 12025 / NBRC 103806 / TLS) (Chlorobium tepidum).